The primary structure comprises 550 residues: Chaperonin GroEL (550 aa).

Residues 29–32 (TAGP), lysine 50, 86–90 (DGTTT), glycine 418, and aspartate 499 each bind ATP.

This sequence belongs to the chaperonin (HSP60) family. Forms a cylinder of 14 subunits composed of two heptameric rings stacked back-to-back. Interacts with the co-chaperonin GroES.

It localises to the cytoplasm. It carries out the reaction ATP + H2O + a folded polypeptide = ADP + phosphate + an unfolded polypeptide.. In terms of biological role, together with its co-chaperonin GroES, plays an essential role in assisting protein folding. The GroEL-GroES system forms a nano-cage that allows encapsulation of the non-native substrate proteins and provides a physical environment optimized to promote and accelerate protein folding. This is Chaperonin GroEL from Wolbachia sp. subsp. Brugia malayi (strain TRS).